A 220-amino-acid chain; its full sequence is Putative O-methyltransferase Mmcs_3995 (220 aa).

S-adenosyl-L-methionine is bound by residues valine 47, glutamate 69, 71-72 (GT), serine 77, aspartate 95, and valine 96. Aspartate 143 is a substrate binding site. Residue aspartate 145 coordinates S-adenosyl-L-methionine.

Belongs to the class I-like SAM-binding methyltransferase superfamily. Cation-dependent O-methyltransferase family.

The polypeptide is Putative O-methyltransferase Mmcs_3995 (Mycobacterium sp. (strain MCS)).